A 315-amino-acid polypeptide reads, in one-letter code: Diacylglycerol kinase (315 aa).

Residues 1-132 (MRKRARIIYN…VDIGKMNNRY (132 aa)) form the DAGKc domain. ATP-binding positions include 10–14 (NPTSG), Thr-41, 67–73 (GDGTLNE), and Thr-94. Residues Lys-213, Asp-216, and Tyr-218 each coordinate Mg(2+). The Proton acceptor role is filled by Glu-273.

The protein belongs to the diacylglycerol/lipid kinase family. As to quaternary structure, homodimer. Requires Mg(2+) as cofactor.

The catalysed reaction is a 1,2-diacyl-sn-glycerol + ATP = a 1,2-diacyl-sn-glycero-3-phosphate + ADP + H(+). In terms of biological role, catalyzes the phosphorylation of diacylglycerol (DAG) into phosphatidic acid. Is a key enzyme involved in the production of lipoteichoic acid by reintroducing DAG formed from the breakdown of membrane phospholipids into the phosphatidylglycerol biosynthetic pathway. The chain is Diacylglycerol kinase (dagK) from Staphylococcus aureus (strain bovine RF122 / ET3-1).